The primary structure comprises 423 residues: Putative competence-damage inducible protein (423 aa).

The protein belongs to the CinA family.

This Streptococcus pyogenes serotype M4 (strain MGAS10750) protein is Putative competence-damage inducible protein.